Consider the following 279-residue polypeptide: uncharacterized protein (279 aa).

This is an uncharacterized protein from Bacillus subtilis (strain 168).